A 206-amino-acid chain; its full sequence is Small ribosomal subunit protein uS4 (206 aa).

The region spanning 98–164 is the S4 RNA-binding domain; that stretch reads MRLDNVVYRL…EKFKTFIENP (67 aa).

The protein belongs to the universal ribosomal protein uS4 family. In terms of assembly, part of the 30S ribosomal subunit. Contacts protein S5. The interaction surface between S4 and S5 is involved in control of translational fidelity.

One of the primary rRNA binding proteins, it binds directly to 16S rRNA where it nucleates assembly of the body of the 30S subunit. Its function is as follows. With S5 and S12 plays an important role in translational accuracy. In Clostridium tetani (strain Massachusetts / E88), this protein is Small ribosomal subunit protein uS4.